A 287-amino-acid polypeptide reads, in one-letter code: Shikimate dehydrogenase (NADP(+)) (287 aa).

Shikimate contacts are provided by residues 21-23 (SKS) and T68. K72 serves as the catalytic Proton acceptor. N93 and D109 together coordinate shikimate. NADP(+) is bound by residues 133 to 137 (GAGGA), 157 to 162 (NRTQTK), and M226. Y228 is a binding site for shikimate. G250 contacts NADP(+).

This sequence belongs to the shikimate dehydrogenase family. As to quaternary structure, homodimer.

The catalysed reaction is shikimate + NADP(+) = 3-dehydroshikimate + NADPH + H(+). The protein operates within metabolic intermediate biosynthesis; chorismate biosynthesis; chorismate from D-erythrose 4-phosphate and phosphoenolpyruvate: step 4/7. Its function is as follows. Involved in the biosynthesis of the chorismate, which leads to the biosynthesis of aromatic amino acids. Catalyzes the reversible NADPH linked reduction of 3-dehydroshikimate (DHSA) to yield shikimate (SA). The chain is Shikimate dehydrogenase (NADP(+)) from Shewanella oneidensis (strain ATCC 700550 / JCM 31522 / CIP 106686 / LMG 19005 / NCIMB 14063 / MR-1).